The chain runs to 378 residues: MASKPEKRVASSVFITLVPPRRDEAVVEEVRRAACEAWPGRPWESAPTKAPGAGSVGKLRSWMPPGRAAAPGPAVPPQLSNGGCSLPPPPLDVDDALPDLDLLPPPPPPPAADLPPPDEEPHSAMGASLISDLEQLHLPPPPPPPQALVEGPPLQPRPSHLKPAEEELPPPPEEPVSFPEREASTDICAFCHKTVSPRELAVEAMKRQYHAQCFTCRVCRRQLAGQSFYQKDGRPLCEPCYQDTLEKCGKCGEVVREHIIRALGQAFHPSCFTCVTCARRIGDESFALDSQNEVYCLDDFYRKFAPVCSICENPIIPRDGKDAFKIECMGRNFHENCYRCEDCRVLLSVEPTDQGCYPLNNRLFCKPCHVKRSAAGCC.

A filamin-binding region spans residues 1–69 (MASKPEKRVA…RSWMPPGRAA (69 aa)). The disordered stretch occupies residues 38 to 179 (WPGRPWESAP…PPPEEPVSFP (142 aa)). Residues 103-115 (LPPPPPPPAADLP) are compositionally biased toward pro residues. LIM zinc-binding domains are found at residues 186–247 (DICA…TLEK), 248–305 (CGKC…RKFA), and 306–375 (PVCS…RSAA). The tract at residues 281–378 (IGDESFALDS…HVKRSAAGCC (98 aa)) is PLEKHC1-binding.

In terms of assembly, interacts with PLEKHC1, FLNA, FLNB and FLNC. Interacts with NKX2-5.

The protein resides in the cell junction. It localises to the focal adhesion. Its subcellular location is the cytoplasm. The protein localises to the cytoskeleton. It is found in the stress fiber. Functionally, serves as an anchoring site for cell-ECM adhesion proteins and filamin-containing actin filaments. Is implicated in cell shape modulation (spreading) and motility. May participate in the regulation of filamin-mediated cross-linking and stabilization of actin filaments. May also regulate the assembly of filamin-containing signaling complexes that control actin assembly. Promotes dissociation of FLNA from ITGB3 and ITGB7. Promotes activation of integrins and regulates integrin-mediated cell-cell adhesion. The chain is Filamin-binding LIM protein 1 (FBLIM1) from Bos taurus (Bovine).